Consider the following 127-residue polypeptide: MSVLYIQIRRNQITVRDLESKREVSGDAAFSNQRLLIANFFVAEKVLQDLVLQLHPRSTWHSFLPAKRMDIVVSALEMNEGGLSQVEERILHEVVAGATLMKYRQFHIHAQSAVLSDSAVMAMLKQK.

This is an uncharacterized protein from Escherichia coli (strain K12).